Consider the following 153-residue polypeptide: Arginine repressor (153 aa).

It belongs to the ArgR family.

It localises to the cytoplasm. It functions in the pathway amino-acid biosynthesis; L-arginine biosynthesis [regulation]. Regulates arginine biosynthesis genes. The chain is Arginine repressor from Haemophilus ducreyi (strain 35000HP / ATCC 700724).